A 303-amino-acid polypeptide reads, in one-letter code: Di/tripeptide transport system permease protein DppC (303 aa).

The next 7 membrane-spanning stretches (helical) occupy residues A33–V53, L103–L123, A131–A151, V152–V172, A202–V222, T225–V245, and W267–M287. Positions A99–G288 constitute an ABC transmembrane type-1 domain.

Belongs to the binding-protein-dependent transport system permease family. OppBC subfamily. As to quaternary structure, the complex is composed of two ATP-binding proteins (DppD and DppF), two transmembrane proteins (DppB and DppC) and a solute-binding protein (DppA1-A5). Five orthologous SBPs (DppA1-A5) are present in P.aeruginosa, which increases the substrate specificity of the DppBCDF transporter.

It localises to the cell inner membrane. Its function is as follows. Part of the ABC transporter DppABCDF involved in the uptake of various di/tripeptides. Is also involved in the uptake of phaseolotoxin, a toxic tripeptide inhibiting the enzyme ornithine carbamoyltransferase. Responsible for the translocation of the substrate across the membrane. This chain is Di/tripeptide transport system permease protein DppC, found in Pseudomonas aeruginosa (strain UCBPP-PA14).